The sequence spans 223 residues: UPF0441 protein YgiB (223 aa).

Residues 178 to 195 (TVPKTAMAPKPATTTTVT) are compositionally biased toward low complexity. The disordered stretch occupies residues 178-223 (TVPKTAMAPKPATTTTVTRGGFGESVAKQSTMQRGATGTSSRSMGG). Residues 204–223 (AKQSTMQRGATGTSSRSMGG) are compositionally biased toward polar residues.

This sequence belongs to the UPF0441 family.

The chain is UPF0441 protein YgiB from Escherichia coli O6:K15:H31 (strain 536 / UPEC).